Reading from the N-terminus, the 314-residue chain is Vomeronasal type-1 receptor 95 (314 aa).

The Extracellular segment spans residues 1–18; the sequence is MNKDNTLYCSAYRIAFFS. Residues 19-39 traverse the membrane as a helical segment; the sequence is EIGIGISANSCLLLFHTFMFI. The Cytoplasmic portion of the chain corresponds to 40-48; that stretch reads RGHRPRLTD. A helical transmembrane segment spans residues 49–69; it reads LPIGLVALIHLVMLLLAAYIT. The Extracellular portion of the chain corresponds to 70-88; sequence EDFFMSSGGWDDITCKLFI. Residues Cys84 and Cys171 are joined by a disulfide bond. The chain crosses the membrane as a helical span at residues 89 to 113; that stretch reads FLHRFFRSLSVCDTCMLSVFQAIIL. Residues 114–133 are Cytoplasmic-facing; sequence CPQSSHLAKFKLNSPHHLSC. The chain crosses the membrane as a helical span at residues 134–154; sequence FFIFMSIFYTSISSHILIAAI. Topologically, residues 155–186 are extracellular; the sequence is ATQNLTSVNLIYITKSCSFLPMSSSMQRTFST. Residue Asn158 is glycosylated (N-linked (GlcNAc...) asparagine). The helical transmembrane segment at 187-207 threads the bilayer; the sequence is LLAFRNVFLIGLMGLSTCYMA. Over 208 to 235 the chain is Cytoplasmic; the sequence is TLLCRHKTRSQQLQNSKLSPKATPEQRA. A helical membrane pass occupies residues 236-256; that stretch reads IWTILMLMSFFLIISTFDSIM. Residues 257 to 268 lie on the Extracellular side of the membrane; it reads TYSRTIFQGNQS. Residue Asn266 is glycosylated (N-linked (GlcNAc...) asparagine). The chain crosses the membrane as a helical span at residues 269 to 289; the sequence is LYCVQIPVAHGYAAFSPLLVL. Over 290–314 the chain is Cytoplasmic; sequence NNEKRLTSLMISMYDRIVRLESLCS.

The protein belongs to the G-protein coupled receptor 1 family.

The protein resides in the cell membrane. Its function is as follows. Putative pheromone receptor implicated in the regulation of social as well as reproductive behavior. The chain is Vomeronasal type-1 receptor 95 (Vom1r95) from Rattus norvegicus (Rat).